The primary structure comprises 760 residues: Serine/threonine-protein kinase Haspin homolog ALK1 (760 aa).

Phosphoserine occurs at positions 76 and 79. Disordered stretches follow at residues 76–100, 123–153, 187–264, and 362–408; these read SDAS…KKRW, SSFT…SSLD, DDIS…STVS, and KRNS…CSYS. Positions 78–95 are enriched in polar residues; the sequence is ASLNVTTGNNTSRKTTSN. The short motif at 200-202 is the KEN box element; the sequence is KEN. A compositionally biased stretch (polar residues) spans 209–220; that stretch reads KKNSSIASTSSE. Residues 224–232 carry the D box motif; that stretch reads RTPLKPLVN. Residues 237 to 250 are compositionally biased toward polar residues; the sequence is PTSQPQQQQPLYNA. Residues 251–264 are compositionally biased toward low complexity; the sequence is SLSSRRSSISSTVS. Over residues 362–386 the composition is skewed to basic residues; it reads KRNSQSSLKHKSSHASLQKFKRNKG. Residues 398-408 show a composition bias toward low complexity; that stretch reads NSSNDDSCSYS. A Protein kinase domain is found at 468–760; that stretch reads NCDIKRILNP…NTGDLLKLYK (293 aa). Residues 474–482 and Lys-510 contribute to the ATP site; that span reads ILNPAKGDV.

This sequence belongs to the protein kinase superfamily. Ser/Thr protein kinase family. Haspin subfamily. Periodically phosphorylated during the cell cycle with a phosphorylation peak during mitosis and hyperphosphorylated after DNA damage.

The enzyme catalyses L-seryl-[protein] + ATP = O-phospho-L-seryl-[protein] + ADP + H(+). It carries out the reaction L-threonyl-[protein] + ATP = O-phospho-L-threonyl-[protein] + ADP + H(+). In terms of biological role, serine/threonine haspin-like protein kinase involved in cell cycle regulation. This Saccharomyces cerevisiae (strain ATCC 204508 / S288c) (Baker's yeast) protein is Serine/threonine-protein kinase Haspin homolog ALK1 (ALK1).